The chain runs to 1267 residues: Eukaryotic translation initiation factor 3 subunit A (1267 aa).

Residues 82–118 (NIKSLEDVVRAYLKLAEEKTETAKEESQQMVLDIEDL) adopt a coiled-coil conformation. Residues 315 to 498 (MQRMSTRVLL…RTLSFGSDLN (184 aa)) form the PCI domain. Composition is skewed to basic and acidic residues over residues 792 to 835 (EERK…LEQE), 844 to 1086 (YQER…DSRP), and 1098 to 1147 (WRER…EGSA). Residues 792–1267 (EERKKQRKED…DDDGWTTVRR (476 aa)) are disordered. 3 repeat units span residues 956-965 (DDDRGPRRGG), 966-975 (DDERPPRRGF), and 976-985 (DDDRGTRRGF). The interval 956–1073 (DDDRGPRRGG…DDERGGRRGM (118 aa)) is 12 X 10 AA approximate tandem repeats of D-[DE]-[DE]-R-[GP]-[GPQT]-R-R-[GPS]-[ADFGIM]. The 4; truncated repeat unit spans residues 986–994 (DDDRGQRRG). A run of 2 repeats spans residues 995-1004 (DDDRGPRRGM) and 1005-1014 (DDDRGPRRPI). The stretch at 1015 to 1023 (DDDRGPRRS) is one 7; truncated repeat. A run of 2 repeats spans residues 1024-1033 (DDDRGPRRGF) and 1034-1043 (DDDRGPRRGM). The 10; approximate repeat unit spans residues 1044 to 1053 (DEPRGPRRGA). Repeat 11 spans residues 1054–1063 (DDDWGPRRGG). The 12; approximate repeat unit spans residues 1064–1073 (DDERGGRRGM). The segment covering 1150-1159 (RGGGGGGGGE) has biased composition (gly residues). Basic and acidic residues predominate over residues 1162–1256 (SSWRDSRRED…KENPRRTKNE (95 aa)).

The protein belongs to the eIF-3 subunit A family. In terms of assembly, component of the eukaryotic translation initiation factor 3 (eIF-3) complex, which is composed of 13 subunits: eif3a, eif3b, eif3c, eif3d, eif3e, eif3f, eif3g, eif3h, eif3i, eif3j, eif3k, eif3l and eif3m.

It is found in the cytoplasm. In terms of biological role, RNA-binding component of the eukaryotic translation initiation factor 3 (eIF-3) complex, which is involved in protein synthesis of a specialized repertoire of mRNAs and, together with other initiation factors, stimulates binding of mRNA and methionyl-tRNAi to the 40S ribosome. The eIF-3 complex specifically targets and initiates translation of a subset of mRNAs involved in cell proliferation. This Danio rerio (Zebrafish) protein is Eukaryotic translation initiation factor 3 subunit A (eif3a).